The chain runs to 424 residues: Glutamate-1-semialdehyde 2,1-aminomutase (424 aa).

An N6-(pyridoxal phosphate)lysine modification is found at Lys266.

Belongs to the class-III pyridoxal-phosphate-dependent aminotransferase family. HemL subfamily. In terms of assembly, homodimer. Requires pyridoxal 5'-phosphate as cofactor.

The protein localises to the cytoplasm. It catalyses the reaction (S)-4-amino-5-oxopentanoate = 5-aminolevulinate. It functions in the pathway porphyrin-containing compound metabolism; protoporphyrin-IX biosynthesis; 5-aminolevulinate from L-glutamyl-tRNA(Glu): step 2/2. This chain is Glutamate-1-semialdehyde 2,1-aminomutase, found in Thermus thermophilus (strain ATCC 27634 / DSM 579 / HB8).